The following is a 124-amino-acid chain: Small ribosomal subunit protein uS12 (124 aa).

The interval 1–23 is disordered; that stretch reads MATINQLVRKPRVRQKQKSNVPA. 3-methylthioaspartic acid is present on D89. The interval 103–124 is disordered; that stretch reads DTAGVGDRRQGRSKYGAKRPKG. Residues 113–124 show a composition bias toward basic residues; sequence GRSKYGAKRPKG.

The protein belongs to the universal ribosomal protein uS12 family. As to quaternary structure, part of the 30S ribosomal subunit. Contacts proteins S8 and S17. May interact with IF1 in the 30S initiation complex.

In terms of biological role, with S4 and S5 plays an important role in translational accuracy. Functionally, interacts with and stabilizes bases of the 16S rRNA that are involved in tRNA selection in the A site and with the mRNA backbone. Located at the interface of the 30S and 50S subunits, it traverses the body of the 30S subunit contacting proteins on the other side and probably holding the rRNA structure together. The combined cluster of proteins S8, S12 and S17 appears to hold together the shoulder and platform of the 30S subunit. In Nitrosococcus oceani (strain ATCC 19707 / BCRC 17464 / JCM 30415 / NCIMB 11848 / C-107), this protein is Small ribosomal subunit protein uS12.